A 281-amino-acid polypeptide reads, in one-letter code: Insulin-like growth factor-binding protein 7 (281 aa).

The N-terminal stretch at 1 to 25 (MERPPRALLLGAAGLLLLLLPLSSS) is a signal peptide. The IGFBP N-terminal domain maps to 27-113 (SSDACGPCVP…PATLAVCVCK (87 aa)). 8 disulfide bridges follow: C31–C56, C34–C58, C39–C59, C47–C62, C70–C86, C80–C110, C112–C130, and C119–C155. The Kazal-like domain occupies 98–157 (GAAAGGPATLAVCVCKSRYPVCGSNGITYPSGCQLRAASLRAESRGEKAITQVSKGTCEQ). Residues 159-263 (PSIVTPPKDI…GQASAAAKIT (105 aa)) form the Ig-like C2-type domain. The N-linked (GlcNAc...) asparagine glycan is linked to N170. A disulfide bridge links C180 with C247. Phosphoserine is present on S238.

May interact with VPS24/CHMP3; the relevance of such interaction however remains unclear. Interacts with CD93; this interaction plays a role in endothelial cells angiogenesis. N-glycosylated. Expressed at high levels in lung, kidney, small intestine, testis and uterus and at moderate levels in liver.

Its subcellular location is the secreted. Binds IGF1 and IGF2 with a relatively low affinity. Stimulates prostacyclin (PGI2) production. Stimulates cell adhesion. Acts as a ligand for CD93 to play a role in angiogenesis. The sequence is that of Insulin-like growth factor-binding protein 7 (Igfbp7) from Mus musculus (Mouse).